A 379-amino-acid polypeptide reads, in one-letter code: Histone-lysine N-methyltransferase ATXR5 (379 aa).

Residues 1-15 (MATWNASSPAASPCS) show a composition bias toward low complexity. A disordered region spans residues 1-42 (MATWNASSPAASPCSSRRRTKAPARRPSSESPPPRKMKSMAE). Residues 1-44 (MATWNASSPAASPCSSRRRTKAPARRPSSESPPPRKMKSMAEIM) constitute a chloroplast transit peptide. A PHD-type zinc finger spans residues 64–114 (NVTCEKCGSGEGDDELLLCDKCDRGFHMKCLRPIVVRVPIGTWLCVDCSDQ). The short motif at 122-129 (QKKILHFF) is the PIP motif element. Met-221 contacts substrate. Positions 245–367 (PPLVVVFDPL…KGERLYYDYN (123 aa)) constitute an SET domain. S-adenosyl-L-methionine is bound by residues 255-257 (EGY) and 317-321 (RFING). Residue Arg-339 participates in substrate binding. Tyr-366 is an S-adenosyl-L-methionine binding site. 369 to 370 (YE) serves as a coordination point for substrate. Tyr-373 serves as a coordination point for S-adenosyl-L-methionine.

Belongs to the class V-like SAM-binding methyltransferase superfamily. Histone-lysine methyltransferase family. TRX/MLL subfamily. In terms of assembly, isoform 1 but not isoform 2 interacts with PCNA1 and PCNA2. Interacts (via PHD domain) with HTR1 (via N-terminus). Isoform 2 interacts with IPS1. In terms of tissue distribution, expressed in leaves, roots, stems, flowers, siliques and developing pollen. Up-regulated in tissues where cell division is active.

The protein resides in the nucleus. It is found in the plastid. The protein localises to the chloroplast. The catalysed reaction is L-lysyl(27)-[histone H3] + S-adenosyl-L-methionine = N(6)-methyl-L-lysyl(27)-[histone H3] + S-adenosyl-L-homocysteine + H(+). Functionally, histone methyltransferase that specifically monomethylates 'Lys-27' of histone H3 (H3K27me1). Has much higher activity on nucleosomes containing H3.1 than H3.3. Involved in the formation of constitutive heterochromatin and the silencing of heterochromatic elements. Influences which sets of rRNA gene variants are expressed or silenced. This Arabidopsis thaliana (Mouse-ear cress) protein is Histone-lysine N-methyltransferase ATXR5 (ATXR5).